The sequence spans 358 residues: Photosystem II protein D1 2 (358 aa).

The next 3 membrane-spanning stretches (helical) occupy residues 28–45 (YVGW…AATT), 117–132 (HFLI…QWEL), and 141–155 (WICV…AAFA). Residue His117 participates in chlorophyll a binding. Tyr125 provides a ligand contact to pheophytin a. Positions 169 and 188 each coordinate [CaMn4O5] cluster. Residues 196–217 (FHMLGVAGVFGGSLFSAMHGSL) form a helical membrane-spanning segment. Residue His197 coordinates chlorophyll a. A quinone-binding positions include His214 and 263-264 (SF). His214 contacts Fe cation. His271 provides a ligand contact to Fe cation. A helical membrane pass occupies residues 273-287 (FLAAWPVVGIWFTSM). Residues His331, Glu332, Asp341, and Ala343 each coordinate [CaMn4O5] cluster. Residues 344 to 358 (ATESTPVALQAPTIG) constitute a propeptide that is removed on maturation.

It belongs to the reaction center PufL/M/PsbA/D family. As to quaternary structure, PSII is composed of 1 copy each of membrane proteins PsbA, PsbB, PsbC, PsbD, PsbE, PsbF, PsbH, PsbI, PsbJ, PsbK, PsbL, PsbM, PsbT, PsbX, PsbY, PsbZ, Psb30/Ycf12, peripheral proteins PsbO, CyanoQ (PsbQ), PsbU, PsbV and a large number of cofactors. It forms dimeric complexes. The cofactor is The D1/D2 heterodimer binds P680, chlorophylls that are the primary electron donor of PSII, and subsequent electron acceptors. It shares a non-heme iron and each subunit binds pheophytin, quinone, additional chlorophylls, carotenoids and lipids. D1 provides most of the ligands for the Mn4-Ca-O5 cluster of the oxygen-evolving complex (OEC). There is also a Cl(-1) ion associated with D1 and D2, which is required for oxygen evolution. The PSII complex binds additional chlorophylls, carotenoids and specific lipids.. Post-translationally, tyr-160 forms a radical intermediate that is referred to as redox-active TyrZ, YZ or Y-Z. In terms of processing, C-terminally processed by CtpA; processing is essential to allow assembly of the oxygen-evolving complex and thus photosynthetic growth.

Its subcellular location is the cellular thylakoid membrane. It carries out the reaction 2 a plastoquinone + 4 hnu + 2 H2O = 2 a plastoquinol + O2. Photosystem II (PSII) is a light-driven water:plastoquinone oxidoreductase that uses light energy to abstract electrons from H(2)O, generating O(2) and a proton gradient subsequently used for ATP formation. It consists of a core antenna complex that captures photons, and an electron transfer chain that converts photonic excitation into a charge separation. The D1/D2 (PsbA/PsbD) reaction center heterodimer binds P680, the primary electron donor of PSII as well as several subsequent electron acceptors. This chain is Photosystem II protein D1 2, found in Synechococcus sp. (strain WH7803).